We begin with the raw amino-acid sequence, 550 residues long: Hydroxylamine reductase (550 aa).

[2Fe-2S] cluster-binding residues include Cys3, Cys6, Cys18, and Cys25. Residues His249, Glu273, Cys317, Cys405, Cys433, Cys458, Glu492, and Lys494 each coordinate hybrid [4Fe-2O-2S] cluster. Cys405 is modified (cysteine persulfide).

This sequence belongs to the HCP family. [2Fe-2S] cluster is required as a cofactor. Hybrid [4Fe-2O-2S] cluster serves as cofactor.

It localises to the cytoplasm. It carries out the reaction A + NH4(+) + H2O = hydroxylamine + AH2 + H(+). Catalyzes the reduction of hydroxylamine to form NH(3) and H(2)O. The protein is Hydroxylamine reductase of Yersinia pseudotuberculosis serotype IB (strain PB1/+).